Reading from the N-terminus, the 191-residue chain is MKQLFLIIGAPGSGKTTDAELIAKNNSETIAHFSTGDLLRAESAKKTERGLLIEKFTSQGELVPLEIVVETILSAIKSSGKGIILIDGYPRSVEQMQALDKELNAQNEVILKSVIEVEVSENTAKERVLGRSRGADDNEKVFHNRMRVFLDPLGEIQNFYKNKKVYKAIDGERSIEEIVGEMQEYILSFGN.

12-17 (GSGKTT) contributes to the ATP binding site. The interval 34 to 63 (STGDLLRAESAKKTERGLLIEKFTSQGELV) is NMP. Residues Thr-35, Arg-40, 61-63 (ELV), 88-91 (GYPR), and Gln-95 contribute to the AMP site. The segment at 130-136 (GRSRGAD) is LID. Residue Arg-131 participates in ATP binding. AMP is bound by residues Arg-133 and Arg-145. ATP is bound at residue Arg-173.

This sequence belongs to the adenylate kinase family. As to quaternary structure, monomer.

It is found in the cytoplasm. The enzyme catalyses AMP + ATP = 2 ADP. Its pathway is purine metabolism; AMP biosynthesis via salvage pathway; AMP from ADP: step 1/1. Its function is as follows. Catalyzes the reversible transfer of the terminal phosphate group between ATP and AMP. Plays an important role in cellular energy homeostasis and in adenine nucleotide metabolism. The sequence is that of Adenylate kinase from Helicobacter pylori (strain ATCC 700392 / 26695) (Campylobacter pylori).